The chain runs to 534 residues: Steroid hormone receptor family member cnr14 (534 aa).

Disordered stretches follow at residues 30–53 and 119–139; these read SGKTASIPSSEASKPEGTNGQWSH and PATSVTSSLSPPDSLSNGHTT. Residues 119 to 130 show a composition bias toward low complexity; sequence PATSVTSSLSPP. The segment at residues 148–223 is a DNA-binding region (nuclear receptor); the sequence is ISFCKVCGDK…SGMSKDSVRQ (76 aa). 2 NR C4-type zinc fingers span residues 151-171 and 187-211; these read CKVCGDKASGYHYGVTSCEGC and CLKQQVCEIKRESRNRCQYCRFKKC. The NR LBD domain maps to 252-493; the sequence is EVDAVYEAVL…PPLVVEMFQL (242 aa). The segment at 502–534 is disordered; it reads HNNQENQYTPAPEHQSPQPQQPTPNQQQTPVHC. A compositionally biased stretch (low complexity) spans 511-534; sequence PAPEHQSPQPQQPTPNQQQTPVHC.

This sequence belongs to the nuclear hormone receptor family. NR1 subfamily. In terms of tissue distribution, most abundant in embryos.

It localises to the nucleus. Transcriptional regulator which is involved in the sex determination and X chromosome dosage compensation pathways. Directly binds to five 5'-A(G/C)(G/T)(T/G)C(A/G)-3' sites in the promoter of sex-determining factor xol-1 to negatively regulate its expression and promote hermaphrodite development. Together with fox-1 is involved in making the distinction between one and two X-chromosomes. Plays a role in the fox-1-mediated repression of the functionally active isoform (isoform b) of the sex-determining factor xol-1 gene to promote hermaphrodite development. Plays a role in the association of the dosage compensation complex proteins dpy-27 and sdc-3 with the hermaphrodite X chromosomes. This chain is Steroid hormone receptor family member cnr14, found in Caenorhabditis elegans.